A 906-amino-acid polypeptide reads, in one-letter code: Probable RNA-directed DNA polymerase from transposon BS (906 aa).

In terms of domain architecture, Reverse transcriptase spans 482–758 (AILRVQFFPK…SQAKYLGITL (277 aa)).

Requires Mg(2+) as cofactor. It depends on Mn(2+) as a cofactor.

It carries out the reaction DNA(n) + a 2'-deoxyribonucleoside 5'-triphosphate = DNA(n+1) + diphosphate. This chain is Probable RNA-directed DNA polymerase from transposon BS, found in Drosophila melanogaster (Fruit fly).